The sequence spans 381 residues: L-lactate dehydrogenase (381 aa).

In terms of domain architecture, FMN hydroxy acid dehydrogenase spans 1 to 380 (MIISASTDYR…SADSLVRELG (380 aa)). Tyr-24 contributes to the substrate binding site. FMN is bound by residues Ser-106 and Gln-127. Residue Tyr-129 coordinates substrate. FMN is bound at residue Thr-155. Substrate is bound at residue Arg-164. Lys-251 serves as a coordination point for FMN. His-275 acts as the Proton acceptor in catalysis. Arg-278 provides a ligand contact to substrate. Residue 306 to 330 (DSGIRTGLDVVRMIALGADSVLLGR) participates in FMN binding.

This sequence belongs to the FMN-dependent alpha-hydroxy acid dehydrogenase family. In terms of assembly, homotetramer. The cofactor is FMN.

The protein resides in the cell inner membrane. The catalysed reaction is (S)-lactate + A = pyruvate + AH2. Its function is as follows. Catalyzes the conversion of L-lactate to pyruvate. Is coupled to the respiratory chain. This is L-lactate dehydrogenase from Pseudomonas aeruginosa (strain UCBPP-PA14).